A 1504-amino-acid chain; its full sequence is Nischarin (1504 aa).

Ala2 bears the N-acetylalanine mark. The interval 2 to 133 is necessary for binding to phosphoinositide-3-P; not sufficient for targeting to endosomes; that stretch reads ATARTFGPER…GITAALAEEL (132 aa). One can recognise a PX domain in the interval 11–121; the sequence is REAEPAKEAR…AHFLHFHFYE (111 aa). Positions 120-695 are necessary for homooligomerization and targeting to endosomes; the sequence is YEINGITAAL…ERLALEWALG (576 aa). The tract at residues 245-869 is interaction with PAK1; it reads LSVRFSATSM…LVYSDKRMVQ (625 aa). LRR repeat units follow at residues 288–309, 311–332, 333–354, 356–377, 378–399, and 403–424; these read ALTTLDLSHNSVSEIDESVKLI, KIEFLDLSHNGLLVVDNLQHLY, NLVHLDLSYNKLSSLEGLHTKL, NIKTLNLAGNLLESLSGLHKLY, SLVNLDLRDNRIEQMEEVRSIG, and CLEHVSLLNNPLSIIPDYRTKV. Positions 463-478 are enriched in basic and acidic residues; it reads KSKLSNPEKKGGEDSR. 4 disordered regions span residues 463–501, 524–547, 554–573, and 628–687; these read KSKLSNPEKKGGEDSRLSAAPCIRPSSSPPTVAPASASL, SSTDSLTPEHQPIAQGCSDSLESI, SDDLRDVPGAVGGASPEHAE, and REEG…EEER. 3 positions are modified to phosphoserine: Ser541, Ser543, and Ser546. Residues 634–695 adopt a coiled-coil conformation; that stretch reads EQGEEEDEEE…ERLALEWALG (62 aa). 2 stretches are compositionally biased toward acidic residues: residues 635-649 and 661-685; these read QGEEEDEEEEEEEDV and DVEEEEGGGQGEEEEEEEEDEEAEE. An interaction with LIMK region spans residues 660-869; it reads PDVEEEEGGG…LVYSDKRMVQ (210 aa). Residues 709 to 807 are interaction with ITGA5; sequence KVLWCFLIHV…ANLHEFHADL (99 aa). The tract at residues 1016-1104 is disordered; that stretch reads TPGTGGSPQG…PAPPPAEAPA (89 aa). Position 1022 is a phosphoserine (Ser1022). The span at 1032–1043 shows a compositional bias: basic and acidic residues; that stretch reads PAERRASNDQRP. The segment covering 1063–1078 has biased composition (low complexity); the sequence is PAAASASGPAKTPAPA. The residue at position 1282 (Thr1282) is a Phosphothreonine. Ser1284 carries the phosphoserine modification.

Homooligomer. Interacts with GRB2. Interacts with PIK3R1; probably associates with the PI3-kinase complex. Interacts with IRS4. Found in a complex with ITGA5 and PAK1. Found in a complex with LIMK1 and PAK1. Interacts with ITGA5 (via cytoplasmic domain); this interaction is direct. Interacts with PAK1 (via kinase domain); this interaction is direct and is increased upon activation of PAK1. Interacts with LIMK1 (via PDZ and kinase domain); this interaction is direct. Interacts with LIMK2; this interaction depends on LIMK2 activity. Interacts with RAC1 (activated state). Interacts with STK11; this interaction may increase STK11 activity. As to expression, isoform 1, isoform 3 and isoform 4 are expressed in brain. Isoform 1 is expressed in endocrine tissues.

It localises to the cell membrane. It is found in the cytoplasm. The protein resides in the early endosome. Its subcellular location is the recycling endosome. In terms of biological role, acts either as the functional imidazoline-1 receptor (I1R) candidate or as a membrane-associated mediator of the I1R signaling. Binds numerous imidazoline ligands that induces initiation of cell-signaling cascades triggering to cell survival, growth and migration. Its activation by the agonist rilmenidine induces an increase in phosphorylation of mitogen-activated protein kinases MAPK1 and MAPK3 in rostral ventrolateral medulla (RVLM) neurons that exhibited rilmenidine-evoked hypotension. Blocking its activation with efaroxan abolished rilmenidine-induced mitogen-activated protein kinase phosphorylation in RVLM neurons. Acts as a modulator of Rac-regulated signal transduction pathways. Suppresses Rac1-stimulated cell migration by interacting with PAK1 and inhibiting its kinase activity. Also blocks Pak-independent Rac signaling by interacting with RAC1 and inhibiting Rac1-stimulated NF-kB response element and cyclin D1 promoter activation. Also inhibits LIMK1 kinase activity by reducing LIMK1 'Tyr-508' phosphorylation. Inhibits Rac-induced cell migration and invasion in breast and colon epithelial cells. Inhibits lamellipodia formation, when overexpressed. Plays a role in protection against apoptosis. Involved in association with IRS4 in the enhancement of insulin activation of MAPK1 and MAPK3. When overexpressed, induces a redistribution of cell surface ITGA5 integrin to intracellular endosomal structures. This is Nischarin (NISCH) from Homo sapiens (Human).